The following is a 179-amino-acid chain: ATP-dependent protease subunit HslV (179 aa).

Residue T9 is part of the active site. Positions 164, 167, and 170 each coordinate Na(+).

Belongs to the peptidase T1B family. HslV subfamily. In terms of assembly, a double ring-shaped homohexamer of HslV is capped on each side by a ring-shaped HslU homohexamer. The assembly of the HslU/HslV complex is dependent on binding of ATP.

The protein localises to the cytoplasm. It carries out the reaction ATP-dependent cleavage of peptide bonds with broad specificity.. Allosterically activated by HslU binding. In terms of biological role, protease subunit of a proteasome-like degradation complex believed to be a general protein degrading machinery. The sequence is that of ATP-dependent protease subunit HslV from Syntrophobacter fumaroxidans (strain DSM 10017 / MPOB).